We begin with the raw amino-acid sequence, 122 residues long: UPF0102 protein XCV0816 (122 aa).

It belongs to the UPF0102 family.

This Xanthomonas euvesicatoria pv. vesicatoria (strain 85-10) (Xanthomonas campestris pv. vesicatoria) protein is UPF0102 protein XCV0816.